A 505-amino-acid polypeptide reads, in one-letter code: MTPGALLLLLLGVLGAHLAPGARGSEAEGRLREKLFSGYDSTVRPAREVGDRVWVSIGLTLAQLISLNEKDEEMSTKVYLDLEWTDYRLSWDPEEHEGIDSLRISAESVWLPDVVLLNNNDGNFDVALDINVVVSSDGSMRWQPPGIYRSSCSIQVTYFPFDWQNCTMVFSSYSYDSSEVSLQTGLSPEGQERQEVYIHEGTFIENGQWEIIHKPSRLIQPSVDPRGGGEGRREEVTFYLIIRRKPLFYLVNVIAPCILITLLAIFVFYLPPDAGEKMGLSIFALLTLTVFLLLLADKVPETSLSVPIIIKYLMFTMVLVTFSVILSVVVLNLHHRSPHTHQMPLWVRQIFIHKLPLYLGLKRPKPERDQMQEPPSIAPRDSPGSGWGRGTDEYFIRKPPNDFLFPKPNRFQPELSAPDLRRFIDGPNRAVGLPPELREVVSSISYIARQLQEQEDHDVLKEDWQFVAMVVDRLFLWTFIIFTSVGTLVIFLDATYHLPPADPFP.

The first 24 residues, 1 to 24 (MTPGALLLLLLGVLGAHLAPGARG), serve as a signal peptide directing secretion. Topologically, residues 25–245 (SEAEGRLREK…VTFYLIIRRK (221 aa)) are extracellular. A disulfide bridge links C152 with C166. An N-linked (GlcNAc...) asparagine glycan is attached at N165. A run of 3 helical transmembrane segments spans residues 246-270 (PLFY…VFYL), 278-295 (MGLS…LLLL), and 312-333 (YLMF…VLNL). Over 334-473 (HHRSPHTHQM…WQFVAMVVDR (140 aa)) the chain is Cytoplasmic. The interval 365–391 (KPERDQMQEPPSIAPRDSPGSGWGRGT) is disordered. Y394 is subject to Phosphotyrosine; by Tyr-kinases. A helical membrane pass occupies residues 474–492 (LFLWTFIIFTSVGTLVIFL).

It belongs to the ligand-gated ion channel (TC 1.A.9) family. Acetylcholine receptor (TC 1.A.9.1) subfamily. Beta-1/CHRNB1 sub-subfamily. As to quaternary structure, pentamer of two alpha chains, and one each of the beta, delta, and gamma (in immature muscle) or epsilon (in mature muscle) chains. The muscle heteropentamer composed of alpha-1, beta-1, delta, epsilon subunits interacts with the alpha-conotoxin ImII.

The protein localises to the postsynaptic cell membrane. It is found in the cell membrane. It catalyses the reaction K(+)(in) = K(+)(out). It carries out the reaction Na(+)(in) = Na(+)(out). After binding acetylcholine, the AChR responds by an extensive change in conformation that affects all subunits and leads to opening of an ion-conducting channel across the plasma membrane. The chain is Acetylcholine receptor subunit beta (CHRNB1) from Bos taurus (Bovine).